Consider the following 795-residue polypeptide: Histidine biosynthesis trifunctional protein (795 aa).

A phosphoribosyl-AMP cyclohydrolase region spans residues 1–225; the sequence is MLPVVPVFNA…VVRQGGSGSF (225 aa). The segment at 226–308 is phosphoribosyl-ATP pyrophosphohydrolase; it reads CHLETESCFG…FYFAMARLVA (83 aa). Residues 309–795 form a histidinol dehydrogenase region; sequence NGVSLEDVER…KLGLLPSGFE (487 aa). Gln-614 and His-617 together coordinate Zn(2+). Active-site residues include Glu-683 and His-684. The Zn(2+) site is built by Asp-717 and His-776.

It in the C-terminal section; belongs to the histidinol dehydrogenase family. It depends on Zn(2+) as a cofactor.

The enzyme catalyses 1-(5-phospho-beta-D-ribosyl)-5'-AMP + H2O = 1-(5-phospho-beta-D-ribosyl)-5-[(5-phospho-beta-D-ribosylamino)methylideneamino]imidazole-4-carboxamide. It catalyses the reaction 1-(5-phospho-beta-D-ribosyl)-ATP + H2O = 1-(5-phospho-beta-D-ribosyl)-5'-AMP + diphosphate + H(+). The catalysed reaction is L-histidinol + 2 NAD(+) + H2O = L-histidine + 2 NADH + 3 H(+). It functions in the pathway amino-acid biosynthesis; L-histidine biosynthesis; L-histidine from 5-phospho-alpha-D-ribose 1-diphosphate: step 2/9. It participates in amino-acid biosynthesis; L-histidine biosynthesis; L-histidine from 5-phospho-alpha-D-ribose 1-diphosphate: step 3/9. Its pathway is amino-acid biosynthesis; L-histidine biosynthesis; L-histidine from 5-phospho-alpha-D-ribose 1-diphosphate: step 9/9. The sequence is that of Histidine biosynthesis trifunctional protein (HIS4) from Kluyveromyces lactis (strain ATCC 8585 / CBS 2359 / DSM 70799 / NBRC 1267 / NRRL Y-1140 / WM37) (Yeast).